The sequence spans 242 residues: Ubiquinone biosynthesis O-methyltransferase (242 aa).

S-adenosyl-L-methionine-binding residues include Arg44, Gly64, Asp85, and Met129.

This sequence belongs to the methyltransferase superfamily. UbiG/COQ3 family.

It carries out the reaction a 3-demethylubiquinol + S-adenosyl-L-methionine = a ubiquinol + S-adenosyl-L-homocysteine + H(+). The catalysed reaction is a 3-(all-trans-polyprenyl)benzene-1,2-diol + S-adenosyl-L-methionine = a 2-methoxy-6-(all-trans-polyprenyl)phenol + S-adenosyl-L-homocysteine + H(+). The protein operates within cofactor biosynthesis; ubiquinone biosynthesis. Its function is as follows. O-methyltransferase that catalyzes the 2 O-methylation steps in the ubiquinone biosynthetic pathway. In Yersinia pseudotuberculosis serotype O:1b (strain IP 31758), this protein is Ubiquinone biosynthesis O-methyltransferase.